The primary structure comprises 253 residues: Adenosylcobinamide-GDP ribazoletransferase (253 aa).

The next 7 membrane-spanning stretches (helical) occupy residues 33 to 53 (ISPL…YVLL), 56 to 76 (ILEA…RGFN), 106 to 126 (IGSG…VALL), 132 to 152 (FYTI…GLYI), 178 to 198 (VLLF…FLVF), 209 to 229 (LGGS…PLFL), and 233 to 253 (EITN…LYLH).

The protein belongs to the CobS family. Requires Mg(2+) as cofactor.

It is found in the cell membrane. The enzyme catalyses alpha-ribazole + adenosylcob(III)inamide-GDP = adenosylcob(III)alamin + GMP + H(+). It carries out the reaction alpha-ribazole 5'-phosphate + adenosylcob(III)inamide-GDP = adenosylcob(III)alamin 5'-phosphate + GMP + H(+). Its pathway is cofactor biosynthesis; adenosylcobalamin biosynthesis; adenosylcobalamin from cob(II)yrinate a,c-diamide: step 7/7. Joins adenosylcobinamide-GDP and alpha-ribazole to generate adenosylcobalamin (Ado-cobalamin). Also synthesizes adenosylcobalamin 5'-phosphate from adenosylcobinamide-GDP and alpha-ribazole 5'-phosphate. This Saccharolobus islandicus (strain M.16.27) (Sulfolobus islandicus) protein is Adenosylcobinamide-GDP ribazoletransferase.